We begin with the raw amino-acid sequence, 134 residues long: Large ribosomal subunit protein uL16c (134 aa).

The tract at residues 1 to 22 (MLSPKRTRFRKQHRGRMKGISH) is disordered.

Belongs to the universal ribosomal protein uL16 family. As to quaternary structure, part of the 50S ribosomal subunit.

It localises to the plastid. The protein localises to the chloroplast. This is Large ribosomal subunit protein uL16c from Nicotiana tomentosiformis (Tobacco).